The primary structure comprises 705 residues: Elongation factor G 2 (705 aa).

A tr-type G domain is found at 8–288 (ERYRNIGISA…AVIDYLPSPA (281 aa)). GTP contacts are provided by residues 17–24 (AHIDAGKT), 86–90 (DTPGH), and 140–143 (NKMD).

Belongs to the TRAFAC class translation factor GTPase superfamily. Classic translation factor GTPase family. EF-G/EF-2 subfamily.

The protein resides in the cytoplasm. Catalyzes the GTP-dependent ribosomal translocation step during translation elongation. During this step, the ribosome changes from the pre-translocational (PRE) to the post-translocational (POST) state as the newly formed A-site-bound peptidyl-tRNA and P-site-bound deacylated tRNA move to the P and E sites, respectively. Catalyzes the coordinated movement of the two tRNA molecules, the mRNA and conformational changes in the ribosome. In Bordetella parapertussis (strain 12822 / ATCC BAA-587 / NCTC 13253), this protein is Elongation factor G 2.